The primary structure comprises 291 residues: U7 snRNA-associated Sm-like protein LSm11 (291 aa).

The interval 55–84 is disordered; it reads ARGRARGAQRGQSRGPGGKRKGRKPEPDPE. In terms of domain architecture, Sm spans 124-199; sequence SPLGELNRCV…LTLTRLFDRL (76 aa). Residues 155-289 are SM; it reads GFIVAFDKFW…RGENVLLVHI (135 aa). The disordered stretch occupies residues 203 to 266; sequence EPGSHDPAKG…RRNRKEKVDY (64 aa). Residues 251 to 261 are compositionally biased toward basic residues; the sequence is NRPKQRRRNRK.

It belongs to the snRNP Sm proteins family. As to quaternary structure, component of the heptameric ring U7 snRNP complex.

It is found in the nucleus. Component of the U7 snRNP complex that is involved in the histone 3'-end pre-mRNA processing. Increases U7 snRNA levels but not histone 3'-end pre-mRNA processing activity, when overexpressed. Binds specifically to the Sm-binding site of U7 snRNA. The protein is U7 snRNA-associated Sm-like protein LSm11 of Xenopus laevis (African clawed frog).